A 420-amino-acid polypeptide reads, in one-letter code: Glutamyl-tRNA reductase (420 aa).

Substrate is bound by residues 49–52, S110, 115–117, and Q121; these read TCNR and EHQ. C50 (nucleophile) is an active-site residue. 190–195 lines the NADP(+) pocket; the sequence is GSGTIN.

Belongs to the glutamyl-tRNA reductase family. Homodimer.

It catalyses the reaction (S)-4-amino-5-oxopentanoate + tRNA(Glu) + NADP(+) = L-glutamyl-tRNA(Glu) + NADPH + H(+). Its pathway is porphyrin-containing compound metabolism; protoporphyrin-IX biosynthesis; 5-aminolevulinate from L-glutamyl-tRNA(Glu): step 1/2. In terms of biological role, catalyzes the NADPH-dependent reduction of glutamyl-tRNA(Glu) to glutamate 1-semialdehyde (GSA). The sequence is that of Glutamyl-tRNA reductase from Wigglesworthia glossinidia brevipalpis.